Here is a 266-residue protein sequence, read N- to C-terminus: 3-methyl-2-oxobutanoate hydroxymethyltransferase (266 aa).

The Mg(2+) site is built by Asp45 and Asp84. 3-methyl-2-oxobutanoate-binding positions include 45–46 (DS), Asp84, and Lys113. Glu115 contacts Mg(2+). The active-site Proton acceptor is the Glu183.

It belongs to the PanB family. As to quaternary structure, homodecamer; pentamer of dimers. Mg(2+) serves as cofactor.

It localises to the cytoplasm. It catalyses the reaction 3-methyl-2-oxobutanoate + (6R)-5,10-methylene-5,6,7,8-tetrahydrofolate + H2O = 2-dehydropantoate + (6S)-5,6,7,8-tetrahydrofolate. Its pathway is cofactor biosynthesis; (R)-pantothenate biosynthesis; (R)-pantoate from 3-methyl-2-oxobutanoate: step 1/2. Its function is as follows. Catalyzes the reversible reaction in which hydroxymethyl group from 5,10-methylenetetrahydrofolate is transferred onto alpha-ketoisovalerate to form ketopantoate. This chain is 3-methyl-2-oxobutanoate hydroxymethyltransferase, found in Coxiella burnetii (strain CbuK_Q154) (Coxiella burnetii (strain Q154)).